Here is a 322-residue protein sequence, read N- to C-terminus: Hydrolase C26A3.11 (322 aa).

The CN hydrolase domain maps to Phe44 to Pro290. The active-site Proton acceptor is the Glu83. The active-site Proton donor is Lys154. Cys195 acts as the Nucleophile in catalysis.

It belongs to the carbon-nitrogen hydrolase superfamily. NIT1/NIT2 family.

This is Hydrolase C26A3.11 from Schizosaccharomyces pombe (strain 972 / ATCC 24843) (Fission yeast).